A 185-amino-acid chain; its full sequence is Large ribosomal subunit protein uL5 (185 aa).

The protein belongs to the universal ribosomal protein uL5 family. As to quaternary structure, part of the 50S ribosomal subunit; part of the 5S rRNA/L5/L18/L25 subcomplex. Contacts the 5S rRNA and the P site tRNA. Forms a bridge to the 30S subunit in the 70S ribosome.

Functionally, this is one of the proteins that bind and probably mediate the attachment of the 5S RNA into the large ribosomal subunit, where it forms part of the central protuberance. In the 70S ribosome it contacts protein S13 of the 30S subunit (bridge B1b), connecting the 2 subunits; this bridge is implicated in subunit movement. Contacts the P site tRNA; the 5S rRNA and some of its associated proteins might help stabilize positioning of ribosome-bound tRNAs. The chain is Large ribosomal subunit protein uL5 from Magnetococcus marinus (strain ATCC BAA-1437 / JCM 17883 / MC-1).